The primary structure comprises 213 residues: Proteasome subunit beta (213 aa).

Positions 1-11 are cleaved as a propeptide — removed in mature form; by autocatalysis; the sequence is MSMIEEKIYKG. The active-site Nucleophile is the Thr12.

The protein belongs to the peptidase T1B family. As to quaternary structure, the 20S proteasome core is composed of 14 alpha and 14 beta subunits that assemble into four stacked heptameric rings, resulting in a barrel-shaped structure. The two inner rings, each composed of seven catalytic beta subunits, are sandwiched by two outer rings, each composed of seven alpha subunits. The catalytic chamber with the active sites is on the inside of the barrel. Has probably a gated structure, the ends of the cylinder being occluded by the N-termini of the alpha-subunits. Is likely capped at one or both ends by the proteasome regulatory ATPase, PAN.

Its subcellular location is the cytoplasm. It catalyses the reaction Cleavage of peptide bonds with very broad specificity.. With respect to regulation, the formation of the proteasomal ATPase PAN-20S proteasome complex, via the docking of the C-termini of PAN into the intersubunit pockets in the alpha-rings, triggers opening of the gate for substrate entry. Interconversion between the open-gate and close-gate conformations leads to a dynamic regulation of the 20S proteasome proteolysis activity. Functionally, component of the proteasome core, a large protease complex with broad specificity involved in protein degradation. The protein is Proteasome subunit beta of Archaeoglobus fulgidus (strain ATCC 49558 / DSM 4304 / JCM 9628 / NBRC 100126 / VC-16).